We begin with the raw amino-acid sequence, 146 residues long: Leghemoglobin 2 (146 aa).

One can recognise a Globin domain in the interval 2–146 (GFTAQQDALV…LAAAIKKAMS (145 aa)). Tyr30 carries the nitrated tyrosine modification. Residue Ser45 coordinates heme b. A Phosphoserine modification is found at Ser45. Residue His61 participates in O2 binding. Positions 64, 93, and 96 each coordinate heme b. Tyr134 is modified (nitrated tyrosine).

This sequence belongs to the plant globin family. As to quaternary structure, monomer. In terms of processing, nitrated in effective nodules and particularly in hypoxic conditions; this mechanism may play a protective role in the symbiosis by buffering toxic peroxynitrite NO(2)(-). Nitration level decrease during nodule senescence. Phosphorylation at Ser-45 disrupts the molecular environment of its porphyrin ring oxygen binding pocket, thus leading to a reduced oxygen consumption and to the delivery of oxygen O(2) to symbiosomes. In terms of tissue distribution, specifically and strongly expressed in root nodules and at low levels in seedlings.

The protein localises to the cytoplasm. It is found in the cytosol. The protein resides in the nucleus. In terms of biological role, leghemoglobin that reversibly binds oxygen O(2) through a pentacoordinated heme iron. In root nodules, facilitates the diffusion of oxygen to the bacteroids while preventing the bacterial nitrogenase from being inactivated by buffering dioxygen, nitric oxide and carbon monoxide, and promoting the formation of reactive oxygen species (ROS, e.g. H(2)O(2)). This role is essential for symbiotic nitrogen fixation (SNF). This Lotus japonicus (Lotus corniculatus var. japonicus) protein is Leghemoglobin 2.